Here is a 339-residue protein sequence, read N- to C-terminus: MRSIFWDDGLKLIDQTKLPEKLEVIECRNVEELADAIKKLAVRGAPALEAAGAYGIALAAREREFADVDELKEHLKKAADFLASTRPTAVNLFVGIERALNAALKGESVEEVKELALREAEKLAEEDVERNRKMGEYGAELLEDGDVVLTYCNAGRLATVDWGTALGVVRSAVEQGKEIRVIACETRPLNQGSRLTCWELMEDGIDVTLITDSMVGIVMQKGMVDKVIVGADRIVRDAVFNKIGTYTVSVVAKHHNIPFYVAAPKATFDWERTAKDVVIEERPREELIFCGKRQIAPLNVKVYNPAFDPTPLENVTALITEYGVIYPPYEVNVPKVLKF.

Substrate contacts are provided by residues 43-45 (RGA), Arg86, and Gln191. Residue Asp232 is the Proton donor of the active site. 241 to 242 (NK) contributes to the substrate binding site.

This sequence belongs to the eIF-2B alpha/beta/delta subunits family. MtnA subfamily.

The catalysed reaction is 5-(methylsulfanyl)-alpha-D-ribose 1-phosphate = 5-(methylsulfanyl)-D-ribulose 1-phosphate. Functionally, catalyzes the interconversion of methylthioribose-1-phosphate (MTR-1-P) into methylthioribulose-1-phosphate (MTRu-1-P). The protein is Putative methylthioribose-1-phosphate isomerase of Archaeoglobus fulgidus (strain ATCC 49558 / DSM 4304 / JCM 9628 / NBRC 100126 / VC-16).